The sequence spans 332 residues: Glycerol-3-phosphate dehydrogenase [NAD(P)+] (332 aa).

Residues Trp11, Arg30, and Lys108 each coordinate NADPH. Lys108, Gly137, and Ser139 together coordinate sn-glycerol 3-phosphate. Residue Ala141 participates in NADPH binding. Residues Lys192, Asp245, Ser255, Arg256, and Asn257 each coordinate sn-glycerol 3-phosphate. The active-site Proton acceptor is the Lys192. Arg256 contributes to the NADPH binding site. Residues Val280 and Glu282 each contribute to the NADPH site.

It belongs to the NAD-dependent glycerol-3-phosphate dehydrogenase family.

It localises to the cytoplasm. The enzyme catalyses sn-glycerol 3-phosphate + NAD(+) = dihydroxyacetone phosphate + NADH + H(+). It catalyses the reaction sn-glycerol 3-phosphate + NADP(+) = dihydroxyacetone phosphate + NADPH + H(+). It participates in membrane lipid metabolism; glycerophospholipid metabolism. Catalyzes the reduction of the glycolytic intermediate dihydroxyacetone phosphate (DHAP) to sn-glycerol 3-phosphate (G3P), the key precursor for phospholipid synthesis. This Burkholderia orbicola (strain AU 1054) protein is Glycerol-3-phosphate dehydrogenase [NAD(P)+].